The sequence spans 216 residues: Probable nicotinate-nucleotide adenylyltransferase (216 aa).

It belongs to the NadD family.

It carries out the reaction nicotinate beta-D-ribonucleotide + ATP + H(+) = deamido-NAD(+) + diphosphate. The protein operates within cofactor biosynthesis; NAD(+) biosynthesis; deamido-NAD(+) from nicotinate D-ribonucleotide: step 1/1. In terms of biological role, catalyzes the reversible adenylation of nicotinate mononucleotide (NaMN) to nicotinic acid adenine dinucleotide (NaAD). This chain is Probable nicotinate-nucleotide adenylyltransferase, found in Geotalea daltonii (strain DSM 22248 / JCM 15807 / FRC-32) (Geobacter daltonii).